A 268-amino-acid polypeptide reads, in one-letter code: Zinc transporter ZupT (268 aa).

5 helical membrane passes run Leu6–Phe26, Ser37–Phe57, Thr70–Ile90, Gly125–Val145, and Ser152–Val172. Fe(2+) is bound by residues Asn136 and Glu139. Zn(2+) contacts are provided by Glu139 and His164. Residues Asn165, Glu168, and Glu197 each coordinate Fe(2+). Position 168 (Glu168) interacts with Zn(2+). The next 2 membrane-spanning stretches (helical) occupy residues Ala201–Phe221 and Met248–Ala268.

Belongs to the ZIP transporter (TC 2.A.5) family. ZupT subfamily.

Its subcellular location is the cell membrane. It catalyses the reaction Zn(2+)(in) = Zn(2+)(out). Its function is as follows. Mediates zinc uptake. May also transport other divalent cations. The sequence is that of Zinc transporter ZupT from Oceanobacillus iheyensis (strain DSM 14371 / CIP 107618 / JCM 11309 / KCTC 3954 / HTE831).